Consider the following 496-residue polypeptide: MEDQREALRKIITTLAMKNEETQTFIYSLKQMLLNVEANSAKVQEDLEAEFQSLTSVLEELKESMLMKIKQDRASRTYELQNQLAACTRALESSEELLETANQTLQASDSEDFSQAAKEIKDGITMAPAFRLSLKAKVSDNMSHLMVDFAQERQMLQALKFLPVPSAPTIDLAESLVSDNCVTLVWHMPDEDSKIDHYVLEYRKTNFEGPPRLKEDHPWMVVEGIRQTEHTLTGLKFDMKYMNIRVKACNKAVAGEFSEPVTLETPAFMFRLDGSTSHQNLRVEDLSAEWDAMGGKVQDIKAREKEGKGRTASPVNSPARGTPSPKRMSSGRGGRDRFTAESYTVLGDTLIDGGEHYWEVRFEPDSKAFGLGVAYRSLGRFEQLGKTAASWCLHANNWLQASFTAKHANKVKVLDSPVPDCLGVHCDFHQGLLSFYNARTKQLLHTFKAKFTQPLLPAFTVWCGSFQVTTGLQVPSAVRCLQKRGSATSSSNTSLT.

The stretch at 4–99 forms a coiled coil; sequence QREALRKIIT…ALESSEELLE (96 aa). The 58-residue stretch at 105–162 folds into the COS domain; sequence LQASDSEDFSQAAKEIKDGITMAPAFRLSLKAKVSDNMSHLMVDFAQERQMLQALKFL. The Fibronectin type-III domain maps to 164-268; sequence VPSAPTIDLA…EPVTLETPAF (105 aa). Positions 290 to 477 constitute a B30.2/SPRY domain; it reads WDAMGGKVQD…VTTGLQVPSA (188 aa). The tract at residues 301 to 336 is disordered; the sequence is KAREKEGKGRTASPVNSPARGTPSPKRMSSGRGGRD. Omega-N-methylarginine occurs at positions 310 and 320.

Oligomerization is required for binding to microtubules.

It localises to the cytoplasm. The protein localises to the cytoskeleton. It is found in the microtubule organizing center. The protein resides in the centrosome. Its subcellular location is the nucleus. It localises to the cleavage furrow. May be involved in microtubule organization and stabilization. The chain is Fibronectin type III and SPRY domain-containing protein 1 (Fsd1) from Mus musculus (Mouse).